Reading from the N-terminus, the 339-residue chain is Adenylosuccinate synthetase (339 aa).

GTP-binding positions include 12–18 (GDEGKGS) and 42–44 (GHS). Residue Asp-13 is the Proton acceptor of the active site. Residues Asp-13 and Gly-42 each contribute to the Mg(2+) site. IMP contacts are provided by residues 13–16 (DEGK), 40–43 (NAGH), Thr-127, Arg-141, Gln-179, Thr-194, and Arg-256. His-43 functions as the Proton donor in the catalytic mechanism. 252–258 (TVTGRRR) is a substrate binding site. GTP-binding positions include Arg-258, 284-286 (MLD), and 324-326 (KTG).

It belongs to the adenylosuccinate synthetase family. As to quaternary structure, homodimer. It depends on Mg(2+) as a cofactor.

It is found in the cytoplasm. The enzyme catalyses IMP + L-aspartate + GTP = N(6)-(1,2-dicarboxyethyl)-AMP + GDP + phosphate + 2 H(+). It participates in purine metabolism; AMP biosynthesis via de novo pathway; AMP from IMP: step 1/2. Functionally, plays an important role in the de novo pathway of purine nucleotide biosynthesis. Catalyzes the first committed step in the biosynthesis of AMP from IMP. This Pyrococcus sp. (strain ST700) protein is Adenylosuccinate synthetase.